Reading from the N-terminus, the 627-residue chain is Coiled-coil domain-containing protein 22 (627 aa).

The sufficient for interaction with COMMD1 stretch occupies residues 1–321 (MEEADRILIH…VADVPATSQR (321 aa)). Positions 1–447 (MEEADRILIH…LQDCRELESS (447 aa)) are sufficicient and required for interaction with CCDC93. The residue at position 410 (serine 410) is a Phosphoserine. Positions 448–535 (RRLAEIQELH…NSLSGKLDRT (88 aa)) form a coiled coil.

It belongs to the CCDC22 family. In terms of assembly, component of the commander complex consisting of the CCC subcomplex and the retriever subcomplex. Component of the CCC (COMMD/CCDC22/CCDC93) subcomplex consisting of COMMD1, COMMD2, COMMD3, COMMD4, COMMD5, COMMD6, COMMD7, COMMD8, COMMD9, COMMD10, CCDC22 and CCDC93. Forms a coiled-coil heterodimer with CCDC22; this heterodimer interacts with the guanine nucleotide exchange factor DENND10; the interaction is direct. Interacts with CUL1, CUL2, CUL3, SKP1, BTRC. Interacts with SNX17 and SNX31. Interacts with CPNE1 and CPNE4.

It localises to the endosome. The protein resides in the cytoplasm. It is found in the cytoskeleton. The protein localises to the microtubule organizing center. Its subcellular location is the centrosome. In terms of biological role, component of the commander complex that is essential for endosomal recycling of transmembrane cargos; the Commander complex is composed of composed of the CCC subcomplex and the retriever subcomplex. Component of the CCC complex, which is involved in the regulation of endosomal recycling of surface proteins, including integrins, signaling receptor and channels. Involved in regulation of NF-kappa-B signaling. Promotes ubiquitination of I-kappa-B-kinase subunit IKBKB and its subsequent proteasomal degradation leading to NF-kappa-B activation; the function may involve association with COMMD8 and a CUL1-dependent E3 ubiquitin ligase complex. May down-regulate NF-kappa-B activity via association with COMMD1 and involving a CUL2-dependent E3 ubiquitin ligase complex. Regulates the cellular localization of COMM domain-containing proteins, such as COMMD1 and COMMD10. Component of the CCC complex, which is involved in the regulation of endosomal recycling of surface proteins, including integrins, signaling receptor and channels. The CCC complex associates with SNX17, retriever and WASH complexes to prevent lysosomal degradation and promote cell surface recycling of numerous cargos such as integrins ITGA5:ITGB1. Plays a role in copper ion homeostasis. Involved in copper-dependent ATP7A trafficking between the trans-Golgi network and vesicles in the cell periphery; the function is proposed to depend on its association within the CCC complex and cooperation with the WASH complex on early endosomes. The chain is Coiled-coil domain-containing protein 22 (Ccdc22) from Mus musculus (Mouse).